A 254-amino-acid chain; its full sequence is MIPPADSLLKHDNPVLISKNTERKSPKSRPLKVSSPQTVLTAPVPPPPKPKTPLLDATKPAEEILNAILPPREWVENNQLWIQQVSSTPSTRMDVVHLQEELDMKLQQRQARETGICPVRRELYSQCFDELIRQVTINCAERGLLLLRVRDEIHMTISAYQTLYESSVAFGMRKALQAEQGKSDMEKRMADLEMEKKDLERQVNEQKAKCEAIEKREAERRQVEEKKHAEEIQFLKRTNQQLKAQLEGIIAPKK.

The segment at 1 to 55 (MIPPADSLLKHDNPVLISKNTERKSPKSRPLKVSSPQTVLTAPVPPPPKPKTPLL) is disordered. Residues 175 to 245 (ALQAEQGKSD…KRTNQQLKAQ (71 aa)) are a coiled coil.

It belongs to the inner dynein arm light chain family.

It is found in the cell projection. The protein localises to the cilium. Its subcellular location is the flagellum. The protein resides in the dynein axonemal particle. It localises to the cytoplasm. Involved in sperm flagellum assembly. The polypeptide is Axonemal dynein light intermediate polypeptide 1 (Xenopus laevis (African clawed frog)).